The sequence spans 486 residues: H2.0-like homeobox protein (486 aa).

Disordered stretches follow at residues 83–173 (ASFQ…SSKD) and 330–486 (KWRH…LGGL). Residues 125-135 (QQQQQQQQPQQ) are compositionally biased toward low complexity. The segment at residues 276–335 (RSWSRAVFSNLQRKGLEKRFEIQKYVTKPDRKQLAAMLGLTDAQVKVWFQNRRMKWRHSK) is a DNA-binding region (homeobox). 2 stretches are compositionally biased toward basic and acidic residues: residues 334–349 (SKEAQAQKDKDKEAGE) and 363–372 (EERSPSRSEG). Residues 373-383 (EAESESSDPES) show a composition bias toward acidic residues. A compositionally biased stretch (basic and acidic residues) spans 390–401 (DTERTEGTERSL). Residues 409–420 (ASAAGALLAASS) show a composition bias toward low complexity. Gly residues predominate over residues 421–440 (GGSGGSGGGGGGGFNFGGLS). Positions 441-474 (SGSTTSAGSSGSHSSGGASELLPAPQPSLSSAPK) are enriched in low complexity. Over residues 475-486 (SPEPVPAPLGGL) the composition is skewed to pro residues.

The protein belongs to the H2.0 homeobox family.

The protein resides in the nucleus. Its function is as follows. Transcription factor required for TBX21/T-bet-dependent maturation of Th1 cells as well as maintenance of Th1-specific gene expression. Involved in embryogenesis and hematopoiesis. In Bos taurus (Bovine), this protein is H2.0-like homeobox protein (HLX).